The sequence spans 1085 residues: DNA polymerase (1085 aa).

Residues 1059 to 1085 (YDQKRPNPRPQEPLLENPFWDDSSQTA) are disordered.

Belongs to the DNA polymerase type-B family. Heterodimer with the terminal protein; this heterodimer binds to bp 9 to 18 of the genome. Forms a complex with viral pTP, DBP and hosts NFIA and POU2F1/OCT1 for initiation of replication.

It is found in the host nucleus. The catalysed reaction is DNA(n) + a 2'-deoxyribonucleoside 5'-triphosphate = DNA(n+1) + diphosphate. Functionally, eukaryotic-type DNA polymerase involved in viral genomic replication. DNA synthesis is protein primed, and acts in a strand displacement replication. In terms of biological role, eukaryotic-type DNA polymerase involved in viral genomic replication. DNA synthesis is protein primed, and acts in a strand displacement replication. Assembles in complex with viral pTP, DBP, host NFIA and host POU2F1/OCT1 on viral origin of replication. The polymerase covalently transfers dCMP onto pTP, thereby initiating complementary strand synthesis. This is DNA polymerase from Pantherophis guttatus (Corn snake).